We begin with the raw amino-acid sequence, 516 residues long: Putative GTP-binding protein 6 (516 aa).

The span at 18–39 (GRGRSAPRAAAPSCPARALAAV) shows a compositional bias: low complexity. The tract at residues 18–82 (GRGRSAPRAA…PEDADENAEE (65 aa)) is disordered. Residues 57-67 (LRADGGRSRTG) are compositionally biased toward basic and acidic residues. Over residues 68–82 (DDEEEPEDADENAEE) the composition is skewed to acidic residues. Residues 295-459 (PVISVVGYTN…ELDAAVLKAT (165 aa)) enclose the Hflx-type G domain. GTP is bound by residues 301–308 (GYTNCGKT), 327–331 (FATLD), 349–352 (DTIG), 418–421 (NKVD), and 437–439 (SAL). Mg(2+) is bound by residues threonine 308 and threonine 329.

This sequence belongs to the TRAFAC class OBG-HflX-like GTPase superfamily. HflX GTPase family. The cofactor is Mg(2+). In terms of tissue distribution, ubiquitously expressed.

The sequence is that of Putative GTP-binding protein 6 (GTPBP6) from Homo sapiens (Human).